The sequence spans 82 residues: Probable glutamyl-tRNA(Gln) amidotransferase subunit C (82 aa).

The protein belongs to the GatC family. As to quaternary structure, heterotrimer of A, B and C subunits.

It catalyses the reaction L-glutamyl-tRNA(Gln) + L-glutamine + ATP + H2O = L-glutaminyl-tRNA(Gln) + L-glutamate + ADP + phosphate + H(+). The catalysed reaction is L-aspartyl-tRNA(Asn) + L-glutamine + ATP + H2O = L-asparaginyl-tRNA(Asn) + L-glutamate + ADP + phosphate + 2 H(+). Allows the formation of correctly charged Asn-tRNA(Asn) or Gln-tRNA(Gln) through the transamidation of misacylated Asp-tRNA(Asn) or Glu-tRNA(Gln) in organisms which lack either or both of asparaginyl-tRNA or glutaminyl-tRNA synthetases. The reaction takes place in the presence of glutamine and ATP through an activated phospho-Asp-tRNA(Asn) or phospho-Glu-tRNA(Gln). This Methanocaldococcus jannaschii (strain ATCC 43067 / DSM 2661 / JAL-1 / JCM 10045 / NBRC 100440) (Methanococcus jannaschii) protein is Probable glutamyl-tRNA(Gln) amidotransferase subunit C.